The following is a 1772-amino-acid chain: MALSLWPLLLLLLLLLLLSFAVTLAPTGPHSLDPGLSFLKSLLSTLDQAPQGSLSRSRFFTFLANISSSFEPGRMGEGPVGEPPPLQPPALRLHDFLVTLRGSPDWEPMLGLLGDMLALLGQEQTPRDFLVHQAGVLGGLVEVLLGALVPGGPPTPTQPPCTRDGPSDCVLAADWLPSLLLLLEGTRWQALVQVQPSVDPTNATGLDGREAAPHFLQGLLGLLTPTGELGSKEALWGGLLRTVGAPLYAAFQEGLLRVTHSLQDEVFSILGQPEPDTNGQCQGGNLQQLLLWGVRHNLSWDVQALGFLSGSPPPPPALLHCLSTGVPLPRASQPSAHISPRQRRAITVEALCENHLGPAPPYSISNFSIHLLCQHTKPATPQPHPSTTAICQTAVWYAVSWAPGAQGWLQACHDQFPDEFLDAICSNLSFSALSGSNRRLVKRLCAGLLPPPTSCPEGLPPVPLTPDIFWGCFLENETLWAERLCGEASLQAVPPSNQAWVQHVCQGPTPDVTASPPCHIGPCGERCPDGGSFLVMVCANDTMYEVLVPFWPWLAGQCRISRGGNDTCFLEGLLGPLLPSLPPLGPSPLCLTPGPFLLGMLSQLPRCQSSVPALAHPTRLHYLLRLLTFLLGPGAGGAEAQGMLGRALLLSSLPDNCSFWDAFRPEGRRSVLRTIGEYLEQDEEQPTPSGFEPTVNPSSGISKMELLACFSPVLWDLLQREKSVWALQILVQAYLHMPPENLQQLVLSAEREAAQGFLTLMLQGKLQGKLQVPPSEEQALGRLTALLLQRYPRLTSQLFIDLSPLIPFLAVSDLMRFPPSLLANDSVLAAIRDYSPGMRPEQKEALAKRLLAPELFGEVPAWPQELLWAVLPLLPHLPLENFLQLSPHQIQALEDSWPAAGLGPGHARHVLRSLVNQSVQDGEEQVRRLGPLACFLSPEELQSLVPLSDPTGPVERGLLECAANGTLSPEGRVAYELLGVLRSSGGAVLSPRELRVWAPLFSQLGLRFLQELSEPQLRAMLPVLQGTSVTPAQAVLLLGRLLPRHDLSLEELCSLHLLLPGLSPQTLQAIPRRVLVGACSCLAPELSRLSACQTAALLQTFRVKDGVKNMGTTGAGPAVCIPGQQPIPTTWPDCLLPLLPLKLLQLDSLALLANRRRYWELPWSEQQAQFLWKKMQVPTNLTLRNLQALGTLAGGMSCEFLQQINSMVDFLEVVHMIYQLPTRVRGSLRACIWAELQRRMAMPEPEWTTVGPELNGLDSKLLLDLPIQLMDRLSNESIMLVVELVQRAPEQLLALTPLHQAALAERALQNLAPKETPVSGEVLETLGPLVGFLGTESTRQIPLQILLSHLSFCLGETFATELGWLLLQESVLGKPELWSQDEVEQAGRLVFTLSTEAISLIPREALGPETLERLLEKQQSWEQSRVGQLCRGPQLAAKKAALVAGVVRPAAEDLPEPVPNCADVRGTFPAACSATQIAEMELSDFKDCLTLFAGDPGLGPEEPRAAMGKAKWLWGPPRGFGPEQILQLGRLLIGLGDQELQELILVDWGVLSTLGQIDGWSSTQLRIVVSSFLRQSGRHVSHLDFVHLTALGYTLCGLRPEELQHISSWEFSQAALFLGTLHLQCSEEQLEFLAHLFVLPGGFGPISNWGPEIFTEIGTIAAGIPDLALSALLRGQIQGVTPLAISVIPPPKFAVVFSPIQLSSLASAQAVAVTPEQMAFLSPEQRRAVAWAQHEGKESPEQQGRSTAWGLQDWSRPSWSLVLTISFLGHLL.

The first 25 residues, 1-25 (MALSLWPLLLLLLLLLLLSFAVTLA), serve as a signal peptide directing secretion. N65, N427, N476, and N565 each carry an N-linked (GlcNAc...) asparagine glycan.

The protein belongs to the stereocilin family.

The protein resides in the secreted. The chain is Putative stereocilin-like protein (STRCP1) from Homo sapiens (Human).